The chain runs to 151 residues: Deoxyuridine 5'-triphosphate nucleotidohydrolase (151 aa).

Substrate-binding positions include 70–72 (RSG), N83, 87–89 (LID), and M97.

The protein belongs to the dUTPase family. The cofactor is Mg(2+).

The catalysed reaction is dUTP + H2O = dUMP + diphosphate + H(+). It participates in pyrimidine metabolism; dUMP biosynthesis; dUMP from dCTP (dUTP route): step 2/2. This enzyme is involved in nucleotide metabolism: it produces dUMP, the immediate precursor of thymidine nucleotides and it decreases the intracellular concentration of dUTP so that uracil cannot be incorporated into DNA. The polypeptide is Deoxyuridine 5'-triphosphate nucleotidohydrolase (Pseudomonas syringae pv. tomato (strain ATCC BAA-871 / DC3000)).